The sequence spans 884 residues: Peroxidase-like protein 2 (884 aa).

Disordered regions lie at residues 1–53 (TTSC…RTKG), 78–188 (VHSK…SQGA), 204–279 (EKET…DDDD), 653–695 (PEIP…SATQ), 710–744 (DLQP…GAVG), and 828–884 (VGGM…SDTK). Residues 17–29 (GTCNNVNKPTVGS) show a composition bias toward polar residues. Residues 32–53 (DKFKRDVKPQYDDKKGDPRTKG) are compositionally biased toward basic and acidic residues. The segment covering 91–118 (KSSAVSPKMPSMGNLQSLGNLLSLGSVP) has biased composition (low complexity). Positions 119 to 129 (VPAPAPAPEPV) are enriched in pro residues. Composition is skewed to basic residues over residues 160-172 (PKSK…KPKP) and 230-245 (RTPK…QSIF). The segment covering 246–267 (RRRDDRKDDRKGLRGTKGRRDD) has biased composition (basic and acidic residues). The segment covering 268 to 279 (SDDNDDSDDDDD) has biased composition (acidic residues). Residues 828–856 (VGGMGGSVGVGGSVGSGGSGGSRGAGGSG) are compositionally biased toward gly residues. The span at 865-884 (DDSKCSDDEKQKYCKNSDTK) shows a compositional bias: basic and acidic residues.

This sequence belongs to the peroxidase family. Component of the acid-insoluble and acid-soluble organic matrix of calcified layers of the shell (at protein level).

It localises to the secreted. In Lottia gigantea (Giant owl limpet), this protein is Peroxidase-like protein 2.